The sequence spans 107 residues: MDKVNNNCCCGENAKPCCTDPNSGCCCVSETNNCCKSDKKECCTGTGEGCKCTGCKCCQPAKSGCCCGDKAKACCTDPNSGCCCSSKTNKCCDSTNKTECKTCECCK.

Residues 1–2 (MD) constitute a propeptide that is removed on maturation.

Belongs to the metallothionein superfamily. Type 7 family.

Functionally, the metallothioneins are involved in the cellular sequestration of toxic metal ions. Binds 12 cadmium ions per molecule. The chain is Metallothionein-1 from Tetrahymena pigmentosa.